The chain runs to 596 residues: Aspartate--tRNA(Asp/Asn) ligase (596 aa).

L-aspartate is bound at residue Glu175. The interval 199-202 (QQYK) is aspartate. L-aspartate contacts are provided by Arg221 and His454. Residue 221–223 (RDE) participates in ATP binding. An ATP-binding site is contributed by Glu488. L-aspartate is bound at residue Arg495. 540 to 543 (GIDR) contributes to the ATP binding site.

It belongs to the class-II aminoacyl-tRNA synthetase family. Type 1 subfamily. In terms of assembly, homodimer.

It localises to the cytoplasm. The enzyme catalyses tRNA(Asx) + L-aspartate + ATP = L-aspartyl-tRNA(Asx) + AMP + diphosphate. Functionally, aspartyl-tRNA synthetase with relaxed tRNA specificity since it is able to aspartylate not only its cognate tRNA(Asp) but also tRNA(Asn). Reaction proceeds in two steps: L-aspartate is first activated by ATP to form Asp-AMP and then transferred to the acceptor end of tRNA(Asp/Asn). This chain is Aspartate--tRNA(Asp/Asn) ligase, found in Rhizobium leguminosarum bv. trifolii (strain WSM2304).